We begin with the raw amino-acid sequence, 153 residues long: Glucose-6-phosphate 1-dehydrogenase (153 aa).

NADP(+) contacts are provided by R21 and K120. K120 contributes to the D-glucose 6-phosphate binding site.

The protein belongs to the glucose-6-phosphate dehydrogenase family.

It is found in the cytoplasm. It localises to the cytosol. It catalyses the reaction D-glucose 6-phosphate + NADP(+) = 6-phospho-D-glucono-1,5-lactone + NADPH + H(+). It functions in the pathway carbohydrate degradation; pentose phosphate pathway; D-ribulose 5-phosphate from D-glucose 6-phosphate (oxidative stage): step 1/3. In terms of biological role, cytosolic glucose-6-phosphate dehydrogenase that catalyzes the first and rate-limiting step of the oxidative branch within the pentose phosphate pathway/shunt, an alternative route to glycolysis for the dissimilation of carbohydrates and a major source of reducing power and metabolic intermediates for fatty acid and nucleic acid biosynthetic processes. The chain is Glucose-6-phosphate 1-dehydrogenase (ZW) from Culex pipiens (House mosquito).